We begin with the raw amino-acid sequence, 152 residues long: Interleukin-3 (152 aa).

A signal peptide spans 1–19 (MSRLPVLLLLQLLVRPGLQ). Residues N34 and N89 are each glycosylated (N-linked (GlcNAc...) asparagine). C35 and C103 are oxidised to a cystine.

The protein belongs to the IL-3 family. In terms of assembly, interacts with IL3RA. In terms of tissue distribution, activated T-cells, mast cells, natural killer cells.

The protein resides in the secreted. Functionally, cytokine secreted predominantly by activated T-lymphocytes as well as mast cells and osteoblastic cells that controls the production and differentiation of hematopoietic progenitor cells into lineage-restricted cells. Also stimulates mature basophils, eosinophils, and monocytes to become functionally activated. In addition, plays an important role in neural cell proliferation and survival. Participates as well in bone homeostasis and inhibits osteoclast differentiation by preventing NF-kappa-B nuclear translocation and activation. Mechanistically, exerts its biological effects through a receptor composed of IL3RA subunit and a signal transducing subunit IL3RB. Receptor stimulation results in the rapid activation of JAK2 kinase activity leading to STAT5-mediated transcriptional program. Alternatively, contributes to cell survival under oxidative stress in non-hematopoietic systems by activating pathways mediated by PI3K/AKT and ERK. This is Interleukin-3 from Homo sapiens (Human).